Here is a 464-residue protein sequence, read N- to C-terminus: Protein btn-1 (464 aa).

The N-terminal stretch at Met-1 to Ala-22 is a signal peptide. Transmembrane regions (helical) follow at residues Ala-38–Leu-58, Val-73–Ile-93, Ile-102–Ser-122, Leu-129–Leu-149, Gly-167–Val-187, Ser-190–Pro-210, Ser-288–Asn-308, Pro-332–Ile-352, Ile-354–His-374, and Leu-376–Leu-396.

It belongs to the battenin family.

It is found in the vacuole membrane. Involved in vacuolar transport and vacuole pH homeostasis. Also required for cytokinesis. The polypeptide is Protein btn-1 (cln3) (Neurospora crassa (strain ATCC 24698 / 74-OR23-1A / CBS 708.71 / DSM 1257 / FGSC 987)).